The sequence spans 199 residues: Large ribosomal subunit protein bL25 (199 aa).

This sequence belongs to the bacterial ribosomal protein bL25 family. CTC subfamily. As to quaternary structure, part of the 50S ribosomal subunit; part of the 5S rRNA/L5/L18/L25 subcomplex. Contacts the 5S rRNA. Binds to the 5S rRNA independently of L5 and L18.

Its function is as follows. This is one of the proteins that binds to the 5S RNA in the ribosome where it forms part of the central protuberance. This chain is Large ribosomal subunit protein bL25, found in Chloroherpeton thalassium (strain ATCC 35110 / GB-78).